Consider the following 203-residue polypeptide: Small ribosomal subunit protein uS4 (203 aa).

The region spanning 93–173 (RRLDNVVFRS…FPSWIQVDKA (81 aa)) is the S4 RNA-binding domain.

Belongs to the universal ribosomal protein uS4 family. As to quaternary structure, part of the 30S ribosomal subunit. Contacts protein S5. The interaction surface between S4 and S5 is involved in control of translational fidelity.

Its function is as follows. One of the primary rRNA binding proteins, it binds directly to 16S rRNA where it nucleates assembly of the body of the 30S subunit. Functionally, with S5 and S12 plays an important role in translational accuracy. This chain is Small ribosomal subunit protein uS4, found in Chlorobium limicola (strain DSM 245 / NBRC 103803 / 6330).